We begin with the raw amino-acid sequence, 158 residues long: Phospholipase A2 AP-PLA2-II (158 aa).

A signal peptide spans 1-16; the sequence is MKTFLILAMAVALAKA. Positions 17-23 are excised as a propeptide; the sequence is QSTDEIT. Disulfide bonds link C51-C158, C53-C69, C68-C138, C75-C131, C85-C124, and C109-C129. Residues G54 and G56 each coordinate Ca(2+). H72 is an active-site residue. D73 is a binding site for Ca(2+). The active site involves D132.

Belongs to the phospholipase A2 family. Group I subfamily. Monomer. Requires Ca(2+) as cofactor. Expressed by the venom gland.

It is found in the secreted. It carries out the reaction a 1,2-diacyl-sn-glycero-3-phosphocholine + H2O = a 1-acyl-sn-glycero-3-phosphocholine + a fatty acid + H(+). In terms of biological role, starfish phospholipase A2 (PLA2) that has hemorrhagic and capillary permeability-increasing activities and hence is considered to be deeply involved in the local inflammation. Shows hemolytic activity only in the presence of phosphatidylcholine (PC). PLA2 catalyzes the calcium-dependent hydrolysis of the 2-acyl groups in 3-sn-phosphoglycerides. The chain is Phospholipase A2 AP-PLA2-II from Acanthaster planci (Crown-of-thorns starfish).